The sequence spans 280 residues: Four and a half LIM domains protein 3 (280 aa).

At Ser-2 the chain carries N-acetylserine. The C4-type zinc finger occupies 7–31 (CAKCNESLYGRKYIQTDSGPYCVPC). LIM zinc-binding domains follow at residues 40–92 (CAEC…CNDC) and 101–153 (CSAC…CVPC). Lys-157 carries the N6-acetyllysine modification. LIM zinc-binding domains lie at 162–212 (CARC…CVAC) and 221–275 (CSSC…CQGC). Lys-235 is modified (N6-acetyllysine).

As to quaternary structure, interacts with SOX15; the interaction recruits FHL3 to FOXK1 promoters where it acts as a transcriptional coactivator of FOXK1. In terms of tissue distribution, expressed only in skeletal muscle.

It localises to the nucleus. The protein resides in the cytoplasm. Its function is as follows. Recruited by SOX15 to FOXK1 promoters where it acts as a transcriptional coactivator of FOXK1. The chain is Four and a half LIM domains protein 3 (FHL3) from Homo sapiens (Human).